The chain runs to 377 residues: Nitric oxide reductase FlRd-NAD(+) reductase (377 aa).

Belongs to the FAD-dependent oxidoreductase family. It depends on FAD as a cofactor.

Its subcellular location is the cytoplasm. The catalysed reaction is 2 reduced [nitric oxide reductase rubredoxin domain] + NAD(+) + H(+) = 2 oxidized [nitric oxide reductase rubredoxin domain] + NADH. Its pathway is nitrogen metabolism; nitric oxide reduction. Its function is as follows. One of at least two accessory proteins for anaerobic nitric oxide (NO) reductase. Reduces the rubredoxin moiety of NO reductase. This chain is Nitric oxide reductase FlRd-NAD(+) reductase, found in Shigella flexneri serotype 5b (strain 8401).